The chain runs to 120 residues: Large ribosomal subunit protein uL18 (120 aa).

The segment at 1 to 26 is disordered; the sequence is MSKAKVTNARRKRSVRLKLRRSGGGR. Positions 8 to 23 are enriched in basic residues; sequence NARRKRSVRLKLRRSG.

Belongs to the universal ribosomal protein uL18 family. In terms of assembly, part of the 50S ribosomal subunit; part of the 5S rRNA/L5/L18/L25 subcomplex. Contacts the 5S and 23S rRNAs.

In terms of biological role, this is one of the proteins that bind and probably mediate the attachment of the 5S RNA into the large ribosomal subunit, where it forms part of the central protuberance. This Bradyrhizobium diazoefficiens (strain JCM 10833 / BCRC 13528 / IAM 13628 / NBRC 14792 / USDA 110) protein is Large ribosomal subunit protein uL18.